Here is a 405-residue protein sequence, read N- to C-terminus: Ubiquitin-like modifier-activating enzyme 5 (405 aa).

The disordered stretch occupies residues 1–44 (MATVEELQTRVKQLEEELERERTRNRGGTDGGGGRKKIDQMSSE). The segment covering 7-24 (LQTRVKQLEEELERERTR) has biased composition (basic and acidic residues). Residues G81, D102, K125, N148, and N182 each contribute to the ATP site. Residues C224 and C227 each coordinate Zn(2+). C248 (glycyl thioester intermediate) is an active-site residue. Residues C301 and C306 each coordinate Zn(2+). Residues 346–377 (AETTEEELKAASHGHVPELVEGVHVAYVRPMT) form a linker region. The short motif at 390 to 405 (DDQESLEDLMAKMKSI) is the UFC1-binding sequence (UFC) element.

Belongs to the ubiquitin-activating E1 family. UBA5 subfamily. As to quaternary structure, homodimer; homodimerization is required for UFM1 activation. Interacts (via UIS motif) with UFM1; binds UFM1 via a trans-binding mechanism in which UFM1 interacts with distinct sites in both subunits of the UBA5 homodimer. Interacts (via C-terminus) with UFC1.

The protein localises to the cytoplasm. It is found in the nucleus. It localises to the endoplasmic reticulum membrane. Its subcellular location is the golgi apparatus. In terms of biological role, E1-like enzyme which specifically catalyzes the first step in ufmylation. Activates UFM1 by first adenylating its C-terminal glycine residue with ATP, and thereafter linking this residue to the side chain of a cysteine residue in E1, yielding a UFM1-E1 thioester and free AMP. Activates UFM1 via a trans-binding mechanism, in which UFM1 interacts with distinct sites in both subunits of the UBA5 homodimer. Trans-binding also promotes stabilization of the UBA5 homodimer, and enhances ATP-binding. Transfer of UFM1 from UBA5 to the E2-like enzyme UFC1 also takes place using a trans mechanism. The sequence is that of Ubiquitin-like modifier-activating enzyme 5 from Branchiostoma floridae (Florida lancelet).